The sequence spans 201 residues: 3-isopropylmalate dehydratase small subunit (201 aa).

It belongs to the LeuD family. LeuD type 1 subfamily. As to quaternary structure, heterodimer of LeuC and LeuD.

It carries out the reaction (2R,3S)-3-isopropylmalate = (2S)-2-isopropylmalate. It functions in the pathway amino-acid biosynthesis; L-leucine biosynthesis; L-leucine from 3-methyl-2-oxobutanoate: step 2/4. Functionally, catalyzes the isomerization between 2-isopropylmalate and 3-isopropylmalate, via the formation of 2-isopropylmaleate. The polypeptide is 3-isopropylmalate dehydratase small subunit (Shewanella frigidimarina (strain NCIMB 400)).